The chain runs to 247 residues: Pulmonary surfactant-associated protein A (247 aa).

An N-terminal signal peptide occupies residues 1-15; the sequence is MLLLSLALTLISAPA. In terms of domain architecture, Collagen-like spans 27 to 99; the sequence is GSPGIPGTPG…PGERGPPGLP (73 aa). Proline 29, proline 32, proline 35, proline 41, proline 53, proline 56, proline 62, proline 66, and proline 69 each carry 4-hydroxyproline. Residues 30–100 form a disordered region; it reads GIPGTPGSHG…GERGPPGLPA (71 aa). Residues 41–50 show a composition bias toward basic and acidic residues; sequence PGRDGRDGVK. Residues 53–64 are compositionally biased toward pro residues; it reads PGPPGPMGPPGG. Basic and acidic residues predominate over residues 83–92; the sequence is ERGDKGEPGE. Positions 132 to 247 constitute a C-type lectin domain; that stretch reads AVGEKIFSTN…LQYRLVICEF (116 aa). Cystine bridges form between cysteine 154-cysteine 245 and cysteine 223-cysteine 237. An N-linked (GlcNAc...) asparagine glycan is attached at asparagine 206. Residues glutamate 214, arginine 216, asparagine 233, and aspartate 234 each coordinate Ca(2+).

This sequence belongs to the SFTPA family. Oligomeric complex of 6 set of homotrimers.

Its subcellular location is the secreted. The protein localises to the extracellular space. The protein resides in the extracellular matrix. It localises to the surface film. Functionally, in presence of calcium ions, it binds to surfactant phospholipids and contributes to lower the surface tension at the air-liquid interface in the alveoli of the mammalian lung and is essential for normal respiration. Enhances the expression of MYO18A/SP-R210 on alveolar macrophages. This chain is Pulmonary surfactant-associated protein A (SFTPA1), found in Oryctolagus cuniculus (Rabbit).